The primary structure comprises 245 residues: 1-(5-phosphoribosyl)-5-[(5-phosphoribosylamino)methylideneamino] imidazole-4-carboxamide isomerase (245 aa).

Asp-11 serves as the catalytic Proton acceptor. The Proton donor role is filled by Asp-132.

This sequence belongs to the HisA/HisF family.

It localises to the cytoplasm. The catalysed reaction is 1-(5-phospho-beta-D-ribosyl)-5-[(5-phospho-beta-D-ribosylamino)methylideneamino]imidazole-4-carboxamide = 5-[(5-phospho-1-deoxy-D-ribulos-1-ylimino)methylamino]-1-(5-phospho-beta-D-ribosyl)imidazole-4-carboxamide. Its pathway is amino-acid biosynthesis; L-histidine biosynthesis; L-histidine from 5-phospho-alpha-D-ribose 1-diphosphate: step 4/9. The sequence is that of 1-(5-phosphoribosyl)-5-[(5-phosphoribosylamino)methylideneamino] imidazole-4-carboxamide isomerase from Bacillus pumilus (strain SAFR-032).